The following is a 286-amino-acid chain: MDIFLAVLPAIFWGSIVLFNVKLGGGPYSQTLGTTLGALIFSIGIYIFVHPTFTPLIFGVGVVSGLFWAVGQSNQLKSIDLIGVSKTMPISTGLQLVSTSLFGVIVFHEWSTKTSIILGVLALIFIIVGIVLASLQSKEEKEAEEGKGNFKKGIVILLISTVGYLVYVVVARLFNVDGWSALLPQAIGMVIGGVLLTFKHKPFNKYAIRNIIPGLIWAAGNMFLFISQPKVGVATSFSLSQMGIVISTLGGIIILGEKKTKRQLVGIIIGIILIIIAGVMLGLAKS.

10 helical membrane-spanning segments follow: residues 4–21 (FLAV…LFNV), 28–50 (YSQT…IFVH), 54–71 (TPLI…WAVG), 84–106 (VSKT…GVIV), 116–135 (IILG…LASL), 154–176 (IVIL…LFNV), 181–198 (ALLP…LLTF), 211–228 (IIPG…FISQ), 233–255 (VATS…IIIL), and 262–284 (RQLV…LGLA).

This sequence belongs to the GRP transporter (TC 2.A.7.5) family.

The protein resides in the cell membrane. Functionally, involved in the uptake of glucose. The chain is Probable glucose uptake protein GlcU (glcU) from Priestia megaterium (Bacillus megaterium).